Here is a 447-residue protein sequence, read N- to C-terminus: CBL-interacting serine/threonine-protein kinase 9 (447 aa).

Positions 19-274 constitute a Protein kinase domain; sequence YEMGRTLGEG…IAELLEDEWF (256 aa). ATP-binding positions include 25-33 and Lys48; that span reads LGEGSFAKV. Asp142 functions as the Proton acceptor in the catalytic mechanism. The segment at 160-189 is activation loop; it reads DFGLSAFSRQVREDGLLHTACGTPNYVAPE. The residue at position 164 (Ser164) is a Phosphoserine. Thr178 is subject to Phosphothreonine. Residues 312 to 336 enclose the NAF domain; sequence EKPVSMNAFELISSSSEFSLENLFE. The interval 343–372 is PPI; it reads KKETRFTSQRSASEIMSKMEETAKPLGFNV.

This sequence belongs to the protein kinase superfamily. CAMK Ser/Thr protein kinase family. SNF1 subfamily. As to quaternary structure, interacts with CBL2 and CBL3. It depends on Mn(2+) as a cofactor. In terms of tissue distribution, expressed at low levels in roots and shoots. Detected in root vascular bundles and in the leaf vascular tissue and hydathode, but not in root tips.

Its subcellular location is the cytoplasm. The protein localises to the nucleus. It catalyses the reaction L-seryl-[protein] + ATP = O-phospho-L-seryl-[protein] + ADP + H(+). It carries out the reaction L-threonyl-[protein] + ATP = O-phospho-L-threonyl-[protein] + ADP + H(+). CIPK serine-threonine protein kinases interact with CBL proteins. Binding of a CBL protein to the regulatory NAF domain of CIPK protein lead to the activation of the kinase in a calcium-dependent manner. Involved in K(+) homeostasis under low-K(+) stress. The polypeptide is CBL-interacting serine/threonine-protein kinase 9 (CIPK9) (Arabidopsis thaliana (Mouse-ear cress)).